A 273-amino-acid chain; its full sequence is Proteasome subunit beta type-5-B (273 aa).

A propeptide spans 1 to 57 (removed in mature form); the sequence is MKLDTSGLETTMPVIGFGSNSEMLDGFSSAPSFDLPRTTDFDGFQKKAVEMVKPAKG. T58 functions as the Nucleophile in the catalytic mechanism.

Belongs to the peptidase T1B family. As to quaternary structure, component of the 20S core complex of the 26S proteasome. The 26S proteasome is composed of a core protease (CP), known as the 20S proteasome, capped at one or both ends by the 19S regulatory particle (RP/PA700). The 20S proteasome core is composed of 28 subunits that are arranged in four stacked rings, resulting in a barrel-shaped structure. The two end rings are each formed by seven alpha subunits, and the two central rings are each formed by seven beta subunits. The catalytic chamber with the active sites is on the inside of the barrel.

The protein localises to the cytoplasm. It is found in the nucleus. The enzyme catalyses Cleavage of peptide bonds with very broad specificity.. The proteasome is a multicatalytic proteinase complex which is characterized by its ability to cleave peptides with Arg, Phe, Tyr, Leu, and Glu adjacent to the leaving group at neutral or slightly basic pH. The proteasome has an ATP-dependent proteolytic activity. The sequence is that of Proteasome subunit beta type-5-B (PBE2) from Arabidopsis thaliana (Mouse-ear cress).